Here is a 208-residue protein sequence, read N- to C-terminus: Large ribosomal subunit protein uL4 (208 aa).

Positions 44-79 are disordered; sequence QRQGTHKSKERSEISGSTRKLGRQKGGGGARRGDIN.

This sequence belongs to the universal ribosomal protein uL4 family. Part of the 50S ribosomal subunit.

Its function is as follows. One of the primary rRNA binding proteins, this protein initially binds near the 5'-end of the 23S rRNA. It is important during the early stages of 50S assembly. It makes multiple contacts with different domains of the 23S rRNA in the assembled 50S subunit and ribosome. Forms part of the polypeptide exit tunnel. The protein is Large ribosomal subunit protein uL4 of Phocaeicola vulgatus (strain ATCC 8482 / DSM 1447 / JCM 5826 / CCUG 4940 / NBRC 14291 / NCTC 11154) (Bacteroides vulgatus).